The sequence spans 84 residues: Large ribosomal subunit protein uL23 (84 aa).

This sequence belongs to the universal ribosomal protein uL23 family. Part of the 50S ribosomal subunit. Contacts protein L29.

In terms of biological role, binds to 23S rRNA. One of the proteins that surrounds the polypeptide exit tunnel on the outside of the ribosome. The protein is Large ribosomal subunit protein uL23 of Halobacterium salinarum (strain ATCC 700922 / JCM 11081 / NRC-1) (Halobacterium halobium).